The chain runs to 276 residues: Cerberus (276 aa).

The first 20 residues, 1–20 (MLLCVLKIYIIFCLVNDGAG), serve as a signal peptide directing secretion. N-linked (GlcNAc...) asparagine glycosylation is found at Asn-103, Asn-118, and Asn-160. Disulfide bonds link Cys-175-Cys-221, Cys-189-Cys-235, Cys-199-Cys-251, and Cys-203-Cys-253. One can recognise a CTCK domain in the interval 175–259 (CKTLPFTQNI…ECACEAHKNN (85 aa)). Asn-234 carries an N-linked (GlcNAc...) asparagine glycan.

It belongs to the DAN family. As to quaternary structure, the long chain interacts with nodal/nr-1, bmp4 and wnt8, thereby inhibiting their function. The short chain interacts with nodal/nr-1 but not bmp4 or wnt8. As to expression, expressed in the anterior endomesoderm of the early gastrula with expression expanded laterally around the margin at the endoderm/mesoderm boundary.

It localises to the secreted. In terms of biological role, inhibits wnt, nodal/nr-1 and bmp signaling in the embryo to promote head formation and anterior neural induction. Within the endoderm, acts as an essential mediator of nodal/nr-1-induced cardiogenesis in the overlying mesoderm. This chain is Cerberus, found in Xenopus tropicalis (Western clawed frog).